The sequence spans 603 residues: Proline--tRNA ligase (603 aa).

Belongs to the class-II aminoacyl-tRNA synthetase family. ProS type 1 subfamily. As to quaternary structure, homodimer.

Its subcellular location is the cytoplasm. It catalyses the reaction tRNA(Pro) + L-proline + ATP = L-prolyl-tRNA(Pro) + AMP + diphosphate. Catalyzes the attachment of proline to tRNA(Pro) in a two-step reaction: proline is first activated by ATP to form Pro-AMP and then transferred to the acceptor end of tRNA(Pro). As ProRS can inadvertently accommodate and process non-cognate amino acids such as alanine and cysteine, to avoid such errors it has two additional distinct editing activities against alanine. One activity is designated as 'pretransfer' editing and involves the tRNA(Pro)-independent hydrolysis of activated Ala-AMP. The other activity is designated 'posttransfer' editing and involves deacylation of mischarged Ala-tRNA(Pro). The misacylated Cys-tRNA(Pro) is not edited by ProRS. In Synechocystis sp. (strain ATCC 27184 / PCC 6803 / Kazusa), this protein is Proline--tRNA ligase.